We begin with the raw amino-acid sequence, 166 residues long: Large ribosomal subunit protein uL10 (166 aa).

The protein belongs to the universal ribosomal protein uL10 family. In terms of assembly, part of the ribosomal stalk of the 50S ribosomal subunit. The N-terminus interacts with L11 and the large rRNA to form the base of the stalk. The C-terminus forms an elongated spine to which L12 dimers bind in a sequential fashion forming a multimeric L10(L12)X complex.

Functionally, forms part of the ribosomal stalk, playing a central role in the interaction of the ribosome with GTP-bound translation factors. In Streptococcus agalactiae serotype III (strain NEM316), this protein is Large ribosomal subunit protein uL10.